A 436-amino-acid chain; its full sequence is 3-ketoacyl-CoA thiolase (436 aa).

C99 serves as the catalytic Acyl-thioester intermediate. Active-site proton acceptor residues include H392 and C422.

The protein belongs to the thiolase-like superfamily. Thiolase family. Heterotetramer of two alpha chains (FadJ) and two beta chains (FadI).

The protein resides in the cytoplasm. It carries out the reaction an acyl-CoA + acetyl-CoA = a 3-oxoacyl-CoA + CoA. It functions in the pathway lipid metabolism; fatty acid beta-oxidation. In terms of biological role, catalyzes the final step of fatty acid oxidation in which acetyl-CoA is released and the CoA ester of a fatty acid two carbons shorter is formed. In Shigella boydii serotype 18 (strain CDC 3083-94 / BS512), this protein is 3-ketoacyl-CoA thiolase.